Here is a 479-residue protein sequence, read N- to C-terminus: ATP synthase subunit beta (479 aa).

Gly153–Thr160 is an ATP binding site.

It belongs to the ATPase alpha/beta chains family. As to quaternary structure, F-type ATPases have 2 components, CF(1) - the catalytic core - and CF(0) - the membrane proton channel. CF(1) has five subunits: alpha(3), beta(3), gamma(1), delta(1), epsilon(1). CF(0) has three main subunits: a(1), b(2) and c(9-12). The alpha and beta chains form an alternating ring which encloses part of the gamma chain. CF(1) is attached to CF(0) by a central stalk formed by the gamma and epsilon chains, while a peripheral stalk is formed by the delta and b chains.

It is found in the cell membrane. The enzyme catalyses ATP + H2O + 4 H(+)(in) = ADP + phosphate + 5 H(+)(out). Produces ATP from ADP in the presence of a proton gradient across the membrane. The catalytic sites are hosted primarily by the beta subunits. This is ATP synthase subunit beta from Lactobacillus helveticus (strain DPC 4571).